Consider the following 251-residue polypeptide: Ribosome maturation factor RimP (251 aa).

A disordered region spans residues 198-251; that stretch reads NLGLEPPAAPHAKISEKTTKNTKPKKKPAPTNTKKHRLAAERARRGEIEPDEGD. Residues 217–234 show a composition bias toward basic residues; the sequence is KNTKPKKKPAPTNTKKHR. Residues 235-245 are compositionally biased toward basic and acidic residues; it reads LAAERARRGEI.

It belongs to the RimP family.

The protein resides in the cytoplasm. Functionally, required for maturation of 30S ribosomal subunits. In Bradyrhizobium diazoefficiens (strain JCM 10833 / BCRC 13528 / IAM 13628 / NBRC 14792 / USDA 110), this protein is Ribosome maturation factor RimP.